The chain runs to 256 residues: Ribonuclease 3 (256 aa).

The RNase III domain maps to 3 to 125 (LEALQQRLGY…IFGAVFLDGG (123 aa)). Position 38 (E38) interacts with Mg(2+). Residue D42 is part of the active site. Residues D111 and E114 each coordinate Mg(2+). The active site involves E114. The region spanning 152-222 (DAKTLLQEYL…AKLALEEAHR (71 aa)) is the DRBM domain. The tract at residues 227-256 (LVKRSRAERTGKTRKQATPPDPQLSLRLKE) is disordered.

This sequence belongs to the ribonuclease III family. Homodimer. Mg(2+) serves as cofactor.

The protein resides in the cytoplasm. The enzyme catalyses Endonucleolytic cleavage to 5'-phosphomonoester.. Functionally, digests double-stranded RNA. Involved in the processing of primary rRNA transcript to yield the immediate precursors to the large and small rRNAs (23S and 16S). Processes some mRNAs, and tRNAs when they are encoded in the rRNA operon. Processes pre-crRNA and tracrRNA of type II CRISPR loci if present in the organism. This chain is Ribonuclease 3, found in Ralstonia nicotianae (strain ATCC BAA-1114 / GMI1000) (Ralstonia solanacearum).